The sequence spans 530 residues: Testis-expressed protein 44 (530 aa).

Over residues 1–10 the composition is skewed to acidic residues; sequence MTAEPLEDPE. Disordered stretches follow at residues 1-85, 207-233, 256-290, and 305-384; these read MTAE…FIRT, ATSA…TSLL, ENNR…QPVL, and QTSV…SPDF. Polar residues-rich tracts occupy residues 11 to 26, 222 to 233, and 257 to 280; these read ASSS…SSDN, GQDNPEETTSLL, and NNRT…TLGN. A compositionally biased stretch (pro residues) spans 365–381; the sequence is PPDPPDPGSPGGSPPHS. A Phosphoserine modification is found at serine 468.

The protein localises to the cytoplasm. The chain is Testis-expressed protein 44 (Tex44) from Mus musculus (Mouse).